The primary structure comprises 535 residues: Potassium channel subfamily K member 10 (535 aa).

Residues 1–68 (MYFSYIGYFF…GLQTVMKWKT (68 aa)) lie on the Cytoplasmic side of the membrane. A helical transmembrane segment spans residues 69 to 89 (VVAIFVVVVVYLVTGGLVFRA). The segment at residues 151–177 (LGSAFFFAGTVITTIGYGNIAPSTEGG) is an intramembrane region (pore-forming). Residues Thr-164, Ile-165, Gly-166, and Tyr-167 each coordinate K(+). Residues 164-169 (TIGYGN) are selectivity filter 1. A helical membrane pass occupies residues 179–199 (IFCILYAIFGIPLFGFLLAGI). The Cytoplasmic segment spans residues 200–230 (GDQLGTIFGKSIARVEKVFRKKQVSQTKIRV). Residues 231–251 (ISTILFILAGCIVFVTIPAVI) traverse the membrane as a helical segment. The pore-forming intramembrane region spans 260 to 291 (ALESIYFVVVTLTTVGFGDFVAGGNAGINYRE). 4 residues coordinate K(+): Thr-273, Val-274, Gly-275, and Phe-276. The selectivity filter 2 stretch occupies residues 273 to 278 (TVGFGD). The helical transmembrane segment at 296 to 316 (LVWFWILVGLAYFAAVLSMIG) threads the bilayer. At 317–535 (DWLRVLSKKT…ENNSLLEDRN (219 aa)) the chain is on the cytoplasmic side. 2 disordered regions span residues 410–438 (QESINNRPNNLRLKGPEQLTKHGQGASED) and 510–535 (EMENGMVPTDTKDQGLENNSLLEDRN). The segment covering 525–535 (LENNSLLEDRN) has biased composition (polar residues).

As to quaternary structure, homodimer; disulfide-linked. Forms heterodimers with other 2-pore domain K(+) channel subunits, such as KCNK2, KCNK4 and KCNK18. As to expression, detected in dorsal root ganglia (DRG) neurons (at protein level).

Its subcellular location is the cell membrane. It catalyses the reaction K(+)(in) = K(+)(out). The catalysed reaction is Rb(+)(in) = Rb(+)(out). It carries out the reaction Cs(+)(in) = Cs(+)(out). Activated by stimuli such as mechanical stretch, acidic pH and polyunsaturated free fatty acids. Activated by a dihydroacridine analog, ML67-33. Inhibited by polycationic dye ruthenium red. Selectively activated by T2A3 (2-[(4-chloro-3-methylphenyl)amino] benzoic acid). In terms of biological role, k(+) channel that conducts voltage-dependent outward rectifying currents upon membrane depolarization. Voltage sensing is coupled to K(+) electrochemical gradient in an 'ion flux gating' mode where outward but not inward ion flow opens the gate. Converts to voltage-independent 'leak' conductance mode upon stimulation by various stimuli including mechanical membrane stretch, acidic pH, heat and lipids. Homo- and heterodimerizes to form functional channels with distinct regulatory and gating properties. In trigeminal ganglia sensory neurons, the heterodimer of KCNK10/TREK-2 and KCNK18/TRESK inhibits neuronal firing and neurogenic inflammation by stabilizing the resting membrane potential at K(+) equilibrium potential as well as by regulating the threshold of action potentials and the spike frequency. Permeable to other monovalent ions such as Rb(+) and Cs(+). The chain is Potassium channel subfamily K member 10 from Mus musculus (Mouse).